Here is a 209-residue protein sequence, read N- to C-terminus: Protein-L-isoaspartate O-methyltransferase (209 aa).

The active site involves Ser59.

It belongs to the methyltransferase superfamily. L-isoaspartyl/D-aspartyl protein methyltransferase family.

The protein resides in the cytoplasm. It catalyses the reaction [protein]-L-isoaspartate + S-adenosyl-L-methionine = [protein]-L-isoaspartate alpha-methyl ester + S-adenosyl-L-homocysteine. Functionally, catalyzes the methyl esterification of L-isoaspartyl residues in peptides and proteins that result from spontaneous decomposition of normal L-aspartyl and L-asparaginyl residues. It plays a role in the repair and/or degradation of damaged proteins. This chain is Protein-L-isoaspartate O-methyltransferase, found in Helicobacter pylori (strain G27).